The primary structure comprises 576 residues: MSSTVIILIVVLLVILVAFYAFAILMRKKTEDRILALEERKESLFDLPVQEEIDSVKKMHLVGQSQTIFREWNQKWLDLSSNSFADLEEHIFEAEQLNDSFHFFRARESVADSEAQIEMMEGDVEGIRQGVAQLVEQEKRNSNKIQESLDLYDNLRSDIADNADLYGTVITELEKHLANIETEFSQFVTLNSTGDPIEAAEVLETAEEHTIALRAITEQIPSFIKTIEKDVPKRLEELQEASDKFIAEDYILPENVNLKERMDDLQHHLEESSSLLEQFELDRVEAELDLIQERVEELYSIFEREYSARRNVEKRSSVLKEYIEHIRVNNKNLLLEIDHVTQAYILSGNEKGYVRGYQEHLESLDADVDEIIANIEAKAIPYSSLSRRVNSVVNALEDIEKNQIKISETLSGLRDEERAAQEIAERFDSELRTIKRYVEKCNLPGLPKDYLDLFFMTGDRVQNLFKELGRVRINIDTINHLVDVSTEDMHVLKEATTNLTDHAVLAEQLIQYANRYKASNEQVAQGISRALQLFENSRDYDGSFDEISKTLEIVEPGAASRISGVYFKNKPTPDYL.

Over 1 to 7 the chain is Extracellular; the sequence is MSSTVII. Residues 8–26 traverse the membrane as a helical segment; sequence LIVVLLVILVAFYAFAILM. Topologically, residues 27 to 576 are cytoplasmic; the sequence is RKKTEDRILA…FKNKPTPDYL (550 aa). Coiled-coil stretches lie at residues 105 to 134, 254 to 305, and 356 to 402; these read RARESVADSEAQIEMMEGDVEGIRQGVAQL, ENVN…FERE, and GYQE…IEKN.

Belongs to the EzrA family.

The protein resides in the cell membrane. Its function is as follows. Negative regulator of FtsZ ring formation; modulates the frequency and position of FtsZ ring formation. Inhibits FtsZ ring formation at polar sites. Interacts either with FtsZ or with one of its binding partners to promote depolymerization. This Lactococcus lactis subsp. cremoris (strain MG1363) protein is Septation ring formation regulator EzrA.